A 125-amino-acid chain; its full sequence is Natriuretic peptide GNP1 (125 aa).

The signal sequence occupies residues Met-1–Ala-25. Disordered stretches follow at residues Gly-23–Lys-78 and Val-105–Lys-125. A propeptide spanning residues His-26–Glu-85 is cleaved from the precursor. A disulfide bridge links Cys-94 with Cys-110.

The protein belongs to the natriuretic peptide family. In terms of tissue distribution, expressed by the venom gland.

It is found in the secreted. Exhibits natriuretic and vasodepressor activity. Acts by stimulating cGMP. This is Natriuretic peptide GNP1 from Varanus varius (Lace monitor lizard).